Here is an 803-residue protein sequence, read N- to C-terminus: Exocyst complex component 6 (803 aa).

This sequence belongs to the SEC15 family. The exocyst complex is composed of EXOC1, EXOC2, EXOC3, EXOC4, EXOC5, EXOC6, EXOC7 and EXOC8. Interacts with CNTRL. Interacts with RAB11A in a GTP-dependent manner.

It localises to the cytoplasm. Its subcellular location is the perinuclear region. It is found in the cell projection. The protein localises to the growth cone. The protein resides in the midbody. It localises to the midbody ring. Component of the exocyst complex involved in the docking of exocytic vesicles with fusion sites on the plasma membrane. Together with RAB11A, RAB3IP, RAB8A, PARD3, PRKCI, ANXA2, CDC42 and DNMBP promotes transcytosis of PODXL to the apical membrane initiation sites (AMIS), apical surface formation and lumenogenesis. In Canis lupus familiaris (Dog), this protein is Exocyst complex component 6 (EXOC6).